Here is a 146-residue protein sequence, read N- to C-terminus: 3-hydroxyacyl-[acyl-carrier-protein] dehydratase FabZ (146 aa).

The active site involves His-46.

Belongs to the thioester dehydratase family. FabZ subfamily.

The protein localises to the cytoplasm. It carries out the reaction a (3R)-hydroxyacyl-[ACP] = a (2E)-enoyl-[ACP] + H2O. Functionally, involved in unsaturated fatty acids biosynthesis. Catalyzes the dehydration of short chain beta-hydroxyacyl-ACPs and long chain saturated and unsaturated beta-hydroxyacyl-ACPs. The protein is 3-hydroxyacyl-[acyl-carrier-protein] dehydratase FabZ of Acinetobacter baumannii (strain ATCC 17978 / DSM 105126 / CIP 53.77 / LMG 1025 / NCDC KC755 / 5377).